Consider the following 371-residue polypeptide: MTSIEPTHLGKKVIVGMSGGVDSSVSAYLLMKQGYQVEGLFMKNWEEDDTDEYCAAADDLKDAQAVCDKLGIKLHTVNFASEYWDNVFEYFLAEYKAGRTPNPDIMCNKEIKFKAFLEFADEILDADYIAMGHYVRRRDIDGTSQMLRGIDGNKDQSYFLYTLGHEQVARSLFPVGELEKSEVREIAKEMGLITHDKKDSTGICFIGERKFTDFLQTFLPAQPGNIETSEGEVIGTHQGLMYHTLGQRKGLGIGGLKNSNEDPWYVVEKDLVRNVLIVGQGGNHPRLMSNGLIANQLHWVDRKGPADGSNITVKTRYRQQDVPCRVTYDSDDILRVIFDEPVAAVTPGQSAVFYDGEICLGGGIIDALIRD.

ATP is bound by residues 16–23 (GMSGGVDS) and Met-42. Positions 102–104 (NPD) are interaction with target base in tRNA. The Nucleophile role is filled by Cys-107. A disulfide bridge links Cys-107 with Cys-204. Gly-132 contributes to the ATP binding site. An interaction with tRNA region spans residues 154 to 156 (KDQ). Cys-204 functions as the Cysteine persulfide intermediate in the catalytic mechanism. The tract at residues 316 to 317 (RY) is interaction with tRNA.

This sequence belongs to the MnmA/TRMU family.

The protein resides in the cytoplasm. It catalyses the reaction S-sulfanyl-L-cysteinyl-[protein] + uridine(34) in tRNA + AH2 + ATP = 2-thiouridine(34) in tRNA + L-cysteinyl-[protein] + A + AMP + diphosphate + H(+). Its function is as follows. Catalyzes the 2-thiolation of uridine at the wobble position (U34) of tRNA, leading to the formation of s(2)U34. In Shewanella halifaxensis (strain HAW-EB4), this protein is tRNA-specific 2-thiouridylase MnmA.